The primary structure comprises 171 residues: Translation initiation factor IF-3 (171 aa).

It belongs to the IF-3 family. Monomer.

It localises to the cytoplasm. Functionally, IF-3 binds to the 30S ribosomal subunit and shifts the equilibrium between 70S ribosomes and their 50S and 30S subunits in favor of the free subunits, thus enhancing the availability of 30S subunits on which protein synthesis initiation begins. This chain is Translation initiation factor IF-3, found in Thermus thermophilus (strain ATCC BAA-163 / DSM 7039 / HB27).